We begin with the raw amino-acid sequence, 487 residues long: Glutamyl-tRNA(Gln) amidotransferase subunit A (487 aa).

Residues Lys-79 and Ser-158 each act as charge relay system in the active site. The active-site Acyl-ester intermediate is the Ser-182.

It belongs to the amidase family. GatA subfamily. As to quaternary structure, heterotrimer of A, B and C subunits.

The catalysed reaction is L-glutamyl-tRNA(Gln) + L-glutamine + ATP + H2O = L-glutaminyl-tRNA(Gln) + L-glutamate + ADP + phosphate + H(+). Its function is as follows. Allows the formation of correctly charged Gln-tRNA(Gln) through the transamidation of misacylated Glu-tRNA(Gln) in organisms which lack glutaminyl-tRNA synthetase. The reaction takes place in the presence of glutamine and ATP through an activated gamma-phospho-Glu-tRNA(Gln). The protein is Glutamyl-tRNA(Gln) amidotransferase subunit A of Ehrlichia chaffeensis (strain ATCC CRL-10679 / Arkansas).